The chain runs to 56 residues: PI-actitoxin-Afv2a (56 aa).

One can recognise a BPTI/Kunitz inhibitor domain in the interval Cys-5–Cys-55. Cystine bridges form between Cys-5/Cys-55, Cys-14/Cys-38, and Cys-30/Cys-51.

It belongs to the venom Kunitz-type family. Sea anemone type 2 potassium channel toxin subfamily. As to expression, expressed by acrorhagi.

The protein localises to the secreted. It localises to the nematocyst. Serine protease inhibitor that is strongly active against trypsin (950 IU/mg) and moderately active against plasmin. The sequence is that of PI-actitoxin-Afv2a from Anthopleura fuscoviridis (Sea anemone).